A 143-amino-acid polypeptide reads, in one-letter code: Peptide methionine sulfoxide reductase MsrB (143 aa).

The MsrB domain maps to 5 to 127 (KEKRLKELNR…NSAALKFIPK (123 aa)). The active-site Nucleophile is C116.

The protein belongs to the MsrB Met sulfoxide reductase family.

The catalysed reaction is L-methionyl-[protein] + [thioredoxin]-disulfide + H2O = L-methionyl-(R)-S-oxide-[protein] + [thioredoxin]-dithiol. The chain is Peptide methionine sulfoxide reductase MsrB from Bacillus pumilus (strain SAFR-032).